The following is a 301-amino-acid chain: Acetylglutamate kinase (301 aa).

Substrate is bound by residues 68–69 (GG), Arg-90, and Asn-195.

The protein belongs to the acetylglutamate kinase family. ArgB subfamily.

The protein resides in the cytoplasm. It carries out the reaction N-acetyl-L-glutamate + ATP = N-acetyl-L-glutamyl 5-phosphate + ADP. Its pathway is amino-acid biosynthesis; L-arginine biosynthesis; N(2)-acetyl-L-ornithine from L-glutamate: step 2/4. Catalyzes the ATP-dependent phosphorylation of N-acetyl-L-glutamate. The protein is Acetylglutamate kinase of Pseudomonas fluorescens (strain SBW25).